The following is a 449-amino-acid chain: Glutamyl-tRNA reductase (449 aa).

Residues 48 to 51 (TCNR), S99, 104 to 106 (EDQ), and Q110 contribute to the substrate site. The Nucleophile role is filled by C49. An NADP(+)-binding site is contributed by 179-184 (GAGEIG).

Belongs to the glutamyl-tRNA reductase family. Homodimer.

The enzyme catalyses (S)-4-amino-5-oxopentanoate + tRNA(Glu) + NADP(+) = L-glutamyl-tRNA(Glu) + NADPH + H(+). It functions in the pathway porphyrin-containing compound metabolism; protoporphyrin-IX biosynthesis; 5-aminolevulinate from L-glutamyl-tRNA(Glu): step 1/2. Functionally, catalyzes the NADPH-dependent reduction of glutamyl-tRNA(Glu) to glutamate 1-semialdehyde (GSA). This Methanosarcina barkeri (strain Fusaro / DSM 804) protein is Glutamyl-tRNA reductase.